We begin with the raw amino-acid sequence, 205 residues long: Imidazole glycerol phosphate synthase subunit HisH (205 aa).

In terms of domain architecture, Glutamine amidotransferase type-1 spans 1–205 (MITIVDYQMG…RFATAPVEVA (205 aa)). Cys-79 acts as the Nucleophile in catalysis. Residues His-182 and Glu-184 contribute to the active site.

In terms of assembly, heterodimer of HisH and HisF.

It localises to the cytoplasm. The catalysed reaction is 5-[(5-phospho-1-deoxy-D-ribulos-1-ylimino)methylamino]-1-(5-phospho-beta-D-ribosyl)imidazole-4-carboxamide + L-glutamine = D-erythro-1-(imidazol-4-yl)glycerol 3-phosphate + 5-amino-1-(5-phospho-beta-D-ribosyl)imidazole-4-carboxamide + L-glutamate + H(+). The enzyme catalyses L-glutamine + H2O = L-glutamate + NH4(+). It participates in amino-acid biosynthesis; L-histidine biosynthesis; L-histidine from 5-phospho-alpha-D-ribose 1-diphosphate: step 5/9. In terms of biological role, IGPS catalyzes the conversion of PRFAR and glutamine to IGP, AICAR and glutamate. The HisH subunit catalyzes the hydrolysis of glutamine to glutamate and ammonia as part of the synthesis of IGP and AICAR. The resulting ammonia molecule is channeled to the active site of HisF. The protein is Imidazole glycerol phosphate synthase subunit HisH of Rhodopirellula baltica (strain DSM 10527 / NCIMB 13988 / SH1).